Consider the following 122-residue polypeptide: UPF0382 membrane protein SAB0533 (122 aa).

4 consecutive transmembrane segments (helical) span residues 3–23, 46–66, 69–89, and 98–118; these read LFIILGALNAMMAVGTGAFGA, MYHGLALLIIGVISGTTSINV, AGWLIFAGIIFFSGSLYILVL, and ITPIGGVLFIIGWIMLIIATF.

This sequence belongs to the UPF0382 family.

It localises to the cell membrane. This is UPF0382 membrane protein SAB0533 from Staphylococcus aureus (strain bovine RF122 / ET3-1).